The following is a 274-amino-acid chain: Insulin-like growth factor-binding protein-like 1 (274 aa).

The N-terminal stretch at 1 to 21 (MPRSPGLFLLLLVLQPLPALG) is a signal peptide. Positions 30–105 (RNPECGPCRP…PEGTGLCVCA (76 aa)) constitute an IGFBP N-terminal domain. 7 disulfide bridges follow: cysteine 34–cysteine 59, cysteine 37–cysteine 61, cysteine 42–cysteine 62, cysteine 48–cysteine 65, cysteine 73–cysteine 87, cysteine 81–cysteine 102, and cysteine 111–cysteine 147. The Kazal-like domain maps to 91–149 (AAGAAPEGTGLCVCAQRGSVCGSDGRSYPSVCALRLRARQAPRALPGHLHKARDGPCEF). Residues 151-255 (PVVITPPQSV…GEAQSHGTVT (105 aa)) enclose the Ig-like C2-type domain. N-linked (GlcNAc...) asparagine glycosylation is present at asparagine 162. Cysteine 172 and cysteine 239 are joined by a disulfide.

It is found in the secreted. Functionally, IGF-binding proteins prolong the half-life of IGFs and have been shown to either inhibit or stimulate the growth promoting effects of the IGFs in cell culture. They alter the interaction of IGFs with their cell surface receptors. The chain is Insulin-like growth factor-binding protein-like 1 (IGFBPL1) from Bos taurus (Bovine).